Reading from the N-terminus, the 330-residue chain is Ketol-acid reductoisomerase (NADP(+)) (330 aa).

The KARI N-terminal Rossmann domain occupies 2-182; sequence ARLYYDTDAN…GGTRAGILET (181 aa). NADP(+) is bound by residues 25–28, Ser-51, Ser-53, and 83–86; these read YGSQ and DEVQ. His-108 is a catalytic residue. An NADP(+)-binding site is contributed by Gly-134. The KARI C-terminal knotted domain maps to 183–328; that stretch reads TFREETETDL…RELRAMFSWL (146 aa). Residues Asp-191, Glu-195, Glu-227, and Glu-231 each coordinate Mg(2+). Ser-252 provides a ligand contact to substrate.

The protein belongs to the ketol-acid reductoisomerase family. The cofactor is Mg(2+).

The enzyme catalyses (2R)-2,3-dihydroxy-3-methylbutanoate + NADP(+) = (2S)-2-acetolactate + NADPH + H(+). It catalyses the reaction (2R,3R)-2,3-dihydroxy-3-methylpentanoate + NADP(+) = (S)-2-ethyl-2-hydroxy-3-oxobutanoate + NADPH + H(+). It functions in the pathway amino-acid biosynthesis; L-isoleucine biosynthesis; L-isoleucine from 2-oxobutanoate: step 2/4. Its pathway is amino-acid biosynthesis; L-valine biosynthesis; L-valine from pyruvate: step 2/4. Involved in the biosynthesis of branched-chain amino acids (BCAA). Catalyzes an alkyl-migration followed by a ketol-acid reduction of (S)-2-acetolactate (S2AL) to yield (R)-2,3-dihydroxy-isovalerate. In the isomerase reaction, S2AL is rearranged via a Mg-dependent methyl migration to produce 3-hydroxy-3-methyl-2-ketobutyrate (HMKB). In the reductase reaction, this 2-ketoacid undergoes a metal-dependent reduction by NADPH to yield (R)-2,3-dihydroxy-isovalerate. In Synechococcus sp. (strain JA-2-3B'a(2-13)) (Cyanobacteria bacterium Yellowstone B-Prime), this protein is Ketol-acid reductoisomerase (NADP(+)).